The chain runs to 179 residues: ATP-dependent protease subunit HslV (179 aa).

Threonine 7 is a catalytic residue. Residues alanine 162, cysteine 165, and threonine 168 each coordinate Na(+).

This sequence belongs to the peptidase T1B family. HslV subfamily. As to quaternary structure, a double ring-shaped homohexamer of HslV is capped on each side by a ring-shaped HslU homohexamer. The assembly of the HslU/HslV complex is dependent on binding of ATP.

It is found in the cytoplasm. The catalysed reaction is ATP-dependent cleavage of peptide bonds with broad specificity.. With respect to regulation, allosterically activated by HslU binding. Functionally, protease subunit of a proteasome-like degradation complex believed to be a general protein degrading machinery. The sequence is that of ATP-dependent protease subunit HslV from Nitrosococcus oceani (strain ATCC 19707 / BCRC 17464 / JCM 30415 / NCIMB 11848 / C-107).